Consider the following 370-residue polypeptide: Glucan endo-1,3-beta-glucosidase, basic vacuolar isoform GLB (370 aa).

An N-terminal signal peptide occupies residues 1–32; that stretch reads MSTSDKHNTPQMAAITLLGLLLVASTIEIAGA. Gln33 is modified (pyrrolidone carboxylic acid). The active-site Proton donor is Glu128. The Nucleophile role is filled by Glu273. The propeptide at 349 to 370 is removed in mature form; sequence VSGGVWDSSVETNATASLISEM. Asn361 carries an N-linked (GlcNAc...) asparagine glycan.

It belongs to the glycosyl hydrolase 17 family. In terms of tissue distribution, is expressed primarily in epidermal cell of healthy plant, and following induction by ethylene, accumulates in mesophyll cells.

It localises to the vacuole. The enzyme catalyses Hydrolysis of (1-&gt;3)-beta-D-glucosidic linkages in (1-&gt;3)-beta-D-glucans.. Implicated in the defense of plants against pathogens. In Nicotiana tabacum (Common tobacco), this protein is Glucan endo-1,3-beta-glucosidase, basic vacuolar isoform GLB.